We begin with the raw amino-acid sequence, 140 residues long: ATP synthase epsilon chain (140 aa).

Belongs to the ATPase epsilon chain family. In terms of assembly, F-type ATPases have 2 components, CF(1) - the catalytic core - and CF(0) - the membrane proton channel. CF(1) has five subunits: alpha(3), beta(3), gamma(1), delta(1), epsilon(1). CF(0) has three main subunits: a, b and c.

Its subcellular location is the cell inner membrane. In terms of biological role, produces ATP from ADP in the presence of a proton gradient across the membrane. The protein is ATP synthase epsilon chain of Neisseria gonorrhoeae (strain ATCC 700825 / FA 1090).